The chain runs to 88 residues: Small ribosomal subunit protein uS15 (88 aa).

The protein belongs to the universal ribosomal protein uS15 family. Part of the 30S ribosomal subunit. Forms a bridge to the 50S subunit in the 70S ribosome, contacting the 23S rRNA.

One of the primary rRNA binding proteins, it binds directly to 16S rRNA where it helps nucleate assembly of the platform of the 30S subunit by binding and bridging several RNA helices of the 16S rRNA. Its function is as follows. Forms an intersubunit bridge (bridge B4) with the 23S rRNA of the 50S subunit in the ribosome. In Caldanaerobacter subterraneus subsp. tengcongensis (strain DSM 15242 / JCM 11007 / NBRC 100824 / MB4) (Thermoanaerobacter tengcongensis), this protein is Small ribosomal subunit protein uS15.